A 381-amino-acid polypeptide reads, in one-letter code: 2-methylcitrate synthase 1 (381 aa).

H192 contacts substrate. H227 is a catalytic residue. 260 to 264 contributes to the CoA binding site; the sequence is RIMGF. The active site involves H266. A substrate-binding site is contributed by R275. Residue D317 is part of the active site. Substrate-binding residues include R342 and R361.

The protein belongs to the citrate synthase family. In terms of assembly, homodimer.

It catalyses the reaction propanoyl-CoA + oxaloacetate + H2O = (2S,3S)-2-methylcitrate + CoA + H(+). It carries out the reaction oxaloacetate + acetyl-CoA + H2O = citrate + CoA + H(+). It participates in carbohydrate metabolism; tricarboxylic acid cycle. In terms of biological role, catalyzes the Claisen condensation of propionyl-CoA and oxaloacetate (OAA) to yield 2-methylcitrate (2-MC) and CoA. Also catalyzes the condensation of oxaloacetate with propionyl-CoA but with a lower specificity. The polypeptide is 2-methylcitrate synthase 1 (prpC1) (Corynebacterium glutamicum (strain ATCC 13032 / DSM 20300 / JCM 1318 / BCRC 11384 / CCUG 27702 / LMG 3730 / NBRC 12168 / NCIMB 10025 / NRRL B-2784 / 534)).